A 209-amino-acid chain; its full sequence is LexA repressor (209 aa).

Positions 29–49 form a DNA-binding region, H-T-H motif; it reads VREIGSAIGLSSTSTVHGHID. Catalysis depends on for autocatalytic cleavage activity residues S130 and K168.

Belongs to the peptidase S24 family. Homodimer.

The enzyme catalyses Hydrolysis of Ala-|-Gly bond in repressor LexA.. Its function is as follows. Represses a number of genes involved in the response to DNA damage (SOS response), including recA and lexA. In the presence of single-stranded DNA, RecA interacts with LexA causing an autocatalytic cleavage which disrupts the DNA-binding part of LexA, leading to derepression of the SOS regulon and eventually DNA repair. This chain is LexA repressor, found in Pediococcus pentosaceus (strain ATCC 25745 / CCUG 21536 / LMG 10740 / 183-1w).